The following is a 416-amino-acid chain: cAMP-dependent protein kinase regulatory subunit (416 aa).

Residues 2–183 (VSSLPKESQA…RLEKSIRNNF (182 aa)) are dimerization and phosphorylation. Phosphoserine occurs at positions 3, 4, 9, 68, 70, 74, 77, 79, 81, 83, and 84. Residues 8-45 (ESQAELQLFQNEINAANPSDFLQFSANYFNKRLEQQRA) form a dimerization/docking domain (D/D) region. The interval 65 to 138 (PEESFSRPQS…TSTPPLPMHF (74 aa)) is disordered. Over residues 70–84 (SRPQSAQSQSRSRSS) the composition is skewed to low complexity. Residue Thr-129 is modified to Phosphothreonine. Ser-130 is subject to Phosphoserine. Residues Thr-131 and Thr-144 each carry the phosphothreonine modification. An Inhibitor sequence (IS) motif is present at residues 142-146 (RRTSV). Position 145 is a phosphoserine; by autocatalysis (Ser-145). The residue at position 147 (Ser-147) is a Phosphoserine. 2 positions are modified to phosphothreonine: Thr-150 and Thr-160. Residues 184-301 (LFNK…KSMP), Glu-249, Arg-258, 302-416 (VLKS…PTRH), Glu-368, and Arg-377 each bind 3',5'-cyclic AMP.

It belongs to the cAMP-dependent kinase regulatory chain family. As to quaternary structure, the inactive holoenzyme of cAMP-dependent protein kinase is a tetramer, composed of 2 regulatory subunits (R, encoded by BCY1) and two catalytic subunits (C, encoded by the 3 partially redundant TPK1, TPK2, and TPK3 genes). Activation by cAMP causes dissociation of the holoenzyme, producing 2 active catalytic monomers C and a regulatory dimer R(2). In terms of processing, phosphorylated by YAK1 in response to glucose starvation. Phosphorylated by MCK1 at Thr-129 upon TOR complex 1 (TORC1) inhibition. Thr-129 phosphorylation activates BCY1 to inhibit PKA. TORC1 inhibits phosphorylation of RxxS/T sites but has no effect on Ser-145 phosphorylation. The phosphorylation sites can be clustered in several groups, all localized in the N-terminal part. The first cluster termed cluster I (CI) is located close to the N-terminus and includes Ser-3, Ser-4 and Ser-9. The second includes Ser-68, Ser-70, Ser-74, Ser-77, Ser-79, Ser-81, Ser-83, and Ser-84. This cluster of phosphorylation sites, termed cluster II (CII), is important for BCY1 cytoplasmic localization and function. The third cluster of phosphorylated residues consists of Thr-144, Ser-145, Ser-147, Thr-150, and Thr-160. This cluster falls within or near the so-called autoinhibitory domain where the catalytic subunit of PKA autophosphorylates the highly conserved Ser-145 to inhibit BCY1. A last cluster of phosphorylated residues included Thr-129, Ser-130, and Thr-131 and is termed cluster III (CIII). Sites in CIII (and to a lesser extent in CII) are hyperphosphorylated in response to rapamycin.

It is found in the cytoplasm. The protein resides in the nucleus. In terms of biological role, regulatory subunit of the cyclic AMP-dependent protein kinase (PKA), an effector of the Ras/cAMP pathway. Inhibits PKA activity in the absence of cAMP. cAMP activates PKA and promotes growth and proliferation in response to good nutrient conditions. Together with ZDS1, provides a negative feedback control on the cell wall integrity-signaling pathway by acting as a negative regulator of MAP kinase SLT2/MPK1. The polypeptide is cAMP-dependent protein kinase regulatory subunit (BCY1) (Saccharomyces cerevisiae (strain ATCC 204508 / S288c) (Baker's yeast)).